Consider the following 258-residue polypeptide: Ribosome maturation factor RimP (258 aa).

Disordered regions lie at residues 48-88 (PQRP…PTSA) and 212-258 (IFKK…AEND). The span at 215–224 (KPQKPGKKPG) shows a compositional bias: basic residues.

The protein belongs to the RimP family.

The protein localises to the cytoplasm. Its function is as follows. Required for maturation of 30S ribosomal subunits. This chain is Ribosome maturation factor RimP, found in Desulfovibrio desulfuricans (strain ATCC 27774 / DSM 6949 / MB).